A 670-amino-acid chain; its full sequence is Aurofusarin cluster transcription factor aurR2 (670 aa).

The zn(2)-C6 fungal-type DNA-binding region spans 12–38 (CVPCQHRKIRCNGQTPCAYCIRTGKEC). 2 disordered regions span residues 57–76 (RLTA…IVSG) and 92–115 (GDEM…RTDT). The segment covering 92–113 (GDEMQGKDVSPDPERPPLRTRT) has biased composition (basic and acidic residues).

The protein resides in the nucleus. Functionally, transcription factor that may participate in the regulation of the expression of the gene cluster that mediates the biosynthesis of aurofusarin, a red mycelium pigment which is acting as a mycotoxin. This Gibberella zeae (strain ATCC MYA-4620 / CBS 123657 / FGSC 9075 / NRRL 31084 / PH-1) (Wheat head blight fungus) protein is Aurofusarin cluster transcription factor aurR2.